The following is a 423-amino-acid chain: Major royal jelly protein 9 (423 aa).

The N-terminal stretch at 1-20 (MSFNIWWLILYFSIVCQAKA) is a signal peptide. 5 N-linked (GlcNAc...) asparagine glycosylation sites follow: asparagine 110, asparagine 118, asparagine 177, asparagine 196, and asparagine 345.

It belongs to the major royal jelly protein family. In terms of tissue distribution, expressed at very low levels in the hypopharyngeal glands of adult worker bees (at protein level); expression peaks at 12 days post eclosion. Secreted into bee venom in the sting apparatus (at protein level). Expressed in the brains of adult worker bees peaking at 12 days post eclosion (at protein level). Expressed in the spermatheca of adult queen bees (at protein level); expression levels are higher in mated queens than in virgin queens. Along with Mrjp8 expressed at very low levels in the head of worker bees compared to other major royal jelly proteins.

Its subcellular location is the secreted. Component of bee sting venom. Component of royal jelly, a substance produced in the hypopharyngeal gland containing proteins, free amino acids, fatty acids, sugars and other nutrients, which is fed to developing larvae by worker nurse bees; may be present only at trace levels. All larvae are fed some royal jelly (also known as worker jelly) early in their development but it forms the principal source of nutrition for larvae destined to become queen bees. Produced in the spermatheca of adult queen bees, along with other major royal jelly proteins, where it may act as a nutrient supply for sperm stored by mated queens, or be involved in energy metabolism. The protein is Major royal jelly protein 9 of Apis mellifera (Honeybee).